A 53-amino-acid chain; its full sequence is Light-harvesting protein B-808/866 beta chain (53 aa).

The residue at position 1 (methionine 1) is an N-formylmethionine. At methionine 1 to aspartate 25 the chain is on the cytoplasmic side. Positions 24 and 42 each coordinate a bacteriochlorophyll. A helical transmembrane segment spans residues isoleucine 26 to tryptophan 48. Residues lysine 49 to proline 53 lie on the Periplasmic side of the membrane.

The protein belongs to the antenna complex beta subunit family. The core complex is formed by different alpha and beta chains, binding bacteriochlorophyll molecules, and arranged most probably in tetrameric structures disposed around the reaction center. The non-pigmented gamma chains may constitute additional components.

The protein resides in the cell membrane. Its function is as follows. Antenna complexes are light-harvesting systems, which transfer the excitation energy to the reaction centers. The chain is Light-harvesting protein B-808/866 beta chain (puf2B) from Chloroflexus aurantiacus (strain ATCC 29366 / DSM 635 / J-10-fl).